The sequence spans 367 residues: Pentatricopeptide repeat-containing protein At1g11900 (367 aa).

8 PPR repeats span residues 69–103 (SKID…NICL), 104–139 (PISV…GKEP), 141–175 (SSDC…SLPY), 176–210 (RLIV…ECKP), 211–241 (DVIT…MKED), 247–281 (NIIT…GIEP), 282–316 (DLLS…QIRP), and 317–347 (SVYV…LKNT).

This sequence belongs to the PPR family. P subfamily.

The chain is Pentatricopeptide repeat-containing protein At1g11900 from Arabidopsis thaliana (Mouse-ear cress).